The primary structure comprises 216 residues: Regulatory protein RecX (216 aa).

The protein belongs to the RecX family.

The protein resides in the cytoplasm. Its function is as follows. Modulates RecA activity. The polypeptide is Regulatory protein RecX (Clostridium tetani (strain Massachusetts / E88)).